The sequence spans 289 residues: Phosphate import ATP-binding protein PstB 2 (289 aa).

An ABC transporter domain is found at 37-276 (LHAKVEAFYY…HTPVIFQNPT (240 aa)). 69–76 (GPSGCGKS) is an ATP binding site.

It belongs to the ABC transporter superfamily. Phosphate importer (TC 3.A.1.7) family. In terms of assembly, the complex is composed of two ATP-binding proteins (PstB), two transmembrane proteins (PstC and PstA) and a solute-binding protein (PstS).

The protein resides in the cell inner membrane. It catalyses the reaction phosphate(out) + ATP + H2O = ADP + 2 phosphate(in) + H(+). Its function is as follows. Part of the ABC transporter complex PstSACB involved in phosphate import. Responsible for energy coupling to the transport system. This Trichormus variabilis (strain ATCC 29413 / PCC 7937) (Anabaena variabilis) protein is Phosphate import ATP-binding protein PstB 2.